A 157-amino-acid chain; its full sequence is Probable succinate transporter subunit YjjB (157 aa).

The next 4 helical transmembrane spans lie at 8–28, 50–70, 87–107, and 129–149; these read LALAQDMILAAIPAVGFAMVF, MILMTSGLNIEWSTFMASMLV, VFTVAAVIPMFPGISAYTAMI, and FLTASSIVGALSIGLSIPGLW.

It belongs to the ThrE exporter (TC 2.A.79) family. In terms of assembly, the transporter is composed of YjjB and YjjP.

It is found in the cell inner membrane. In terms of biological role, involved in succinate export with YjjP. Both proteins are required for export. The chain is Probable succinate transporter subunit YjjB from Escherichia coli O127:H6 (strain E2348/69 / EPEC).